The following is a 516-amino-acid chain: Probable inactive beta-glucosidase 14 (516 aa).

An N-terminal signal peptide occupies residues Met-1–Ala-23. A beta-D-glucoside is bound by residues Gln-43, His-145, and Asn-190 to Gln-191. An N-linked (GlcNAc...) asparagine glycan is attached at Asn-193. Residues Cys-210 and Cys-217 are joined by a disulfide bond. Asn-221 and Asn-270 each carry an N-linked (GlcNAc...) asparagine glycan. Tyr-334 contributes to the a beta-D-glucoside binding site. The cysteines at positions 342 and 347 are disulfide-linked. Glu-405 serves as a coordination point for a beta-D-glucoside. The active-site Nucleophile is Glu-405. 2 N-linked (GlcNAc...) asparagine glycosylation sites follow: Asn-415 and Asn-423. A beta-D-glucoside-binding positions include Trp-454, Glu-461–Trp-462, and Phe-470.

It belongs to the glycosyl hydrolase 1 family. As to expression, expressed in flowers and endosperm.

This chain is Probable inactive beta-glucosidase 14, found in Oryza sativa subsp. japonica (Rice).